The following is a 590-amino-acid chain: 2-hydroxyacyl-CoA lyase (590 aa).

2-hydroxyisobutanoyl-CoA contacts are provided by residues Gly43, Gln128, Gln255, 273 to 274, and Arg362; that span reads RS. A thiamine diphosphate-binding site is contributed by 410–412; the sequence is GDL. 2-hydroxyisobutanoyl-CoA is bound at residue Arg417. A thiamine diphosphate-binding site is contributed by Gly433. Mg(2+) is bound at residue Asp460. Thiamine diphosphate is bound by residues 461–462 and 487–492; these read GA and NRAWNI. Asn487 and Ala489 together coordinate Mg(2+). Glu493 functions as the Proton acceptor in the catalytic mechanism. 561-564 contacts 2-hydroxyisobutanoyl-CoA; it reads DSGK. The C-terminal lid stretch occupies residues 566-590; that stretch reads LGFVPDYQALTPWNDAEVARRQEGI.

It belongs to the TPP enzyme family. A homotetramer formed by a dimer of dimers; active sites are located in the dimer interface. Requires Mg(2+) as cofactor. It depends on thiamine diphosphate as a cofactor.

It catalyses the reaction 2-hydroxyisobutanoyl-CoA = formyl-CoA + acetone. With respect to regulation, activity is stimulated by thiamine diphosphate. Its function is as follows. A lyase that reversibly degrades 2-hydroxyisobutyryl-CoA (2-HIB-CoA) to acetone and formyl-CoA. Probably also cleaves 2-hydroxy-2-methylbutyryl-CoA to butanone and formyl-CoA. Does not act on 2-hydroxy-2-ethylbutyryl-CoA. A C-terminal lid closes the active site upon substrate binding, and with residues Leu-127 and Ile-492 restricts the size of the active site cavity so it can only use short-chain (C4 and C5) acyl substrates. Part of a pathway that allows cells to grow on 2-methylpropane-1,2-diol or 2-hydroxyisobutyric acid (2-HIBA) as a sole carbon source. The protein is 2-hydroxyacyl-CoA lyase of Actinomycetospora chiangmaiensis (strain DSM 45062 / JCM 15998 / CCTCC AA 205017 / NBRC 104400 / YIM 0006).